The following is a 1500-amino-acid chain: Myosin-8 (1500 aa).

Residues 8 to 57 (AVGSHVWVEDPDEAWLDGEVVEINGDQIKVLCASGKQVVVKDSNIYPKDV) enclose the Myosin N-terminal SH3-like domain. Residues 62–732 (SGVEDMTRLA…QMADLDTRRT (671 aa)) form the Myosin motor domain. Residues 156-163 (GESGAGKT) and 210-218 (NNNSSRFGK) contribute to the ATP site. 4 actin-binding regions span residues 496–530 (LIEK…YQTY), 532–555 (NHKR…AGDV), 590–613 (FPPV…KQQL), and 613–635 (LVSL…KPNN). IQ domains are found at residues 735–764 (LGRS…SATQ), 758–787 (LRIS…EAAA), 783–812 (REAA…ATIL), 806–835 (LFSA…TKAA), 831–860 (QTKA…AAIT), and 854–883 (LKKA…AARE). Residues 884-1049 (TGALQEAKNK…TEKQIMLQQT (166 aa)) are a coiled coil. One can recognise a Dilute domain in the interval 1146-1447 (DRLIEMIGSA…ISSMRALMTE (302 aa)).

The protein belongs to the TRAFAC class myosin-kinesin ATPase superfamily. Myosin family. Plant myosin class XI subfamily. Homodimer.

Its subcellular location is the cytoplasm. Myosin heavy chain that is required for the cell cycle-regulated transport of various organelles and proteins for their segregation. Functions by binding with its tail domain to receptor proteins on organelles and exerting force with its N-terminal motor domain against actin filaments, thereby transporting its cargo along polarized actin cables. The chain is Myosin-8 (XI-B) from Arabidopsis thaliana (Mouse-ear cress).